Consider the following 340-residue polypeptide: GTP 3',8-cyclase (340 aa).

Residues 8–227 (KLGRPIRDLR…TMIEQHFEID (220 aa)) enclose the Radical SAM core domain. A GTP-binding site is contributed by Arg-17. [4Fe-4S] cluster contacts are provided by Cys-24 and Cys-28. Tyr-30 contributes to the S-adenosyl-L-methionine binding site. Residue Cys-31 participates in [4Fe-4S] cluster binding. Arg-71 is a GTP binding site. Gly-75 is an S-adenosyl-L-methionine binding site. Thr-102 is a binding site for GTP. An S-adenosyl-L-methionine-binding site is contributed by Ser-126. Lys-163 contributes to the GTP binding site. Met-197 contributes to the S-adenosyl-L-methionine binding site. [4Fe-4S] cluster-binding residues include Cys-261 and Cys-264. 266 to 268 (RAR) lines the GTP pocket. Residue Cys-278 participates in [4Fe-4S] cluster binding.

The protein belongs to the radical SAM superfamily. MoaA family. As to quaternary structure, monomer and homodimer. [4Fe-4S] cluster is required as a cofactor.

It catalyses the reaction GTP + AH2 + S-adenosyl-L-methionine = (8S)-3',8-cyclo-7,8-dihydroguanosine 5'-triphosphate + 5'-deoxyadenosine + L-methionine + A + H(+). It participates in cofactor biosynthesis; molybdopterin biosynthesis. Catalyzes the cyclization of GTP to (8S)-3',8-cyclo-7,8-dihydroguanosine 5'-triphosphate. The sequence is that of GTP 3',8-cyclase from Staphylococcus aureus (strain USA300).